A 262-amino-acid chain; its full sequence is Acyl-coenzyme A diphosphatase FITM2 (262 aa).

The Cytoplasmic segment spans residues 1–23; it reads MEHLERCAWFLRGTLVRATVRRH. The helical transmembrane segment at 24 to 44 threads the bilayer; the sequence is LPWALVAAMLAGSVVKELSPL. Over 45 to 57 the chain is Lumenal; that stretch reads PESYLSNKRNVLN. A helical transmembrane segment spans residues 58 to 78; that stretch reads VYFVKLAWAWTVCLLLPFIAL. Over 79–93 the chain is Cytoplasmic; the sequence is TNYHLTGKTSLVLRR. Residues 94 to 114 form a helical membrane-spanning segment; sequence LSTLLVGTAIWYICTALFSNI. At 115–145 the chain is on the lumenal side; the sequence is EHYTGSCYQSPALEGIRQEHRSKQQCHREGG. A helical membrane pass occupies residues 146–166; it reads FWHGFDISGHSFLLTFCALMI. Residue histidine 155 is part of the active site. At 167–190 the chain is on the cytoplasmic side; the sequence is VEEMAVLHEVKTDRGHHLHAAITT. Residues 191–211 traverse the membrane as a helical segment; it reads LVVALGFLTFIWVWMFLCTAV. Over 212–218 the chain is Lumenal; sequence YFHDLTQ. Histidine 214 is a catalytic residue. Residues 219–239 form a helical membrane-spanning segment; it reads KVFGTMFGLLGWYGTYGYWYL. Residues 240-262 lie on the Cytoplasmic side of the membrane; that stretch reads KSFSPGLPPQSCSLTLKRDTYKK.

It belongs to the FIT family. As to expression, widely expressed, with highest levels in white and brown adipose tissues (at protein level). In the heart, mRNA expression levels do not correlate well with protein levels, suggesting post-transcriptional regulation in this organ.

Its subcellular location is the endoplasmic reticulum membrane. It carries out the reaction an acyl-CoA + H2O = an acyl-4'-phosphopantetheine + adenosine 3',5'-bisphosphate + 2 H(+). The catalysed reaction is (9Z)-octadecenoyl-CoA + H2O = S-(9Z-octadecenoyl)-4'-phosphopantetheine + adenosine 3',5'-bisphosphate + 2 H(+). The enzyme catalyses (5Z,8Z,11Z,14Z)-eicosatetraenoyl-CoA + H2O = S-(5Z,8Z,11Z,14Z-eicosatetraenoyl)-4'-phosphopantetheine + adenosine 3',5'-bisphosphate + 2 H(+). It catalyses the reaction hexadecanoyl-CoA + H2O = S-hexadecanoyl-4'-phosphopantetheine + adenosine 3',5'-bisphosphate + 2 H(+). Its function is as follows. Fatty acyl-coenzyme A (CoA) diphosphatase that hydrolyzes fatty acyl-CoA to yield acyl-4'-phosphopantetheine and adenosine 3',5'-bisphosphate. Preferentially hydrolyzes unsaturated long-chain acyl-CoA substrates such as oleoyl-CoA/(9Z)-octadecenoyl-CoA and arachidonoyl-CoA/(5Z,8Z,11Z,14Z)-eicosatetraenoyl-CoA in the endoplasmic reticulum (ER) lumen. This catalytic activity is required for maintaining ER structure and for lipid droplets (LDs) biogenesis, which are lipid storage organelles involved in maintaining lipid and energy homeostasis. Directly binds to diacylglycerol (DAGs) and triacylglycerol, which is also important for LD biogenesis. May support directional budding of nacent LDs from the ER into the cytosol by reducing DAG levels at sites of LD formation. Plays a role in the regulation of cell morphology and cytoskeletal organization. The protein is Acyl-coenzyme A diphosphatase FITM2 of Mus musculus (Mouse).